A 100-amino-acid chain; its full sequence is Small ribosomal subunit protein uS14c (100 aa).

It belongs to the universal ribosomal protein uS14 family. As to quaternary structure, part of the 30S ribosomal subunit.

Its subcellular location is the plastid. The protein localises to the chloroplast. Functionally, binds 16S rRNA, required for the assembly of 30S particles. The chain is Small ribosomal subunit protein uS14c from Olimarabidopsis pumila (Dwarf rocket).